Here is a 430-residue protein sequence, read N- to C-terminus: Enolase (430 aa).

Gln166 lines the (2R)-2-phosphoglycerate pocket. Catalysis depends on Glu208, which acts as the Proton donor. Positions 245, 288, and 315 each coordinate Mg(2+). The (2R)-2-phosphoglycerate site is built by Lys340, Arg369, Ser370, and Lys391. The active-site Proton acceptor is Lys340.

The protein belongs to the enolase family. Mg(2+) is required as a cofactor.

The protein localises to the cytoplasm. Its subcellular location is the secreted. The protein resides in the cell surface. It carries out the reaction (2R)-2-phosphoglycerate = phosphoenolpyruvate + H2O. The protein operates within carbohydrate degradation; glycolysis; pyruvate from D-glyceraldehyde 3-phosphate: step 4/5. In terms of biological role, catalyzes the reversible conversion of 2-phosphoglycerate (2-PG) into phosphoenolpyruvate (PEP). It is essential for the degradation of carbohydrates via glycolysis. This chain is Enolase, found in Clostridium beijerinckii (strain ATCC 51743 / NCIMB 8052) (Clostridium acetobutylicum).